A 157-amino-acid polypeptide reads, in one-letter code: Glutaredoxin-2, mitochondrial (157 aa).

A mitochondrion-targeting transit peptide spans 1-18 (MYWRRAALVGTRLIPVRS). S20 carries the post-translational modification Phosphoserine. A Glutaredoxin domain is found at 51–151 (VNQIQETISN…PLVHQCHLKN (101 aa)). Residue C62 coordinates [2Fe-2S] cluster. Glutathione is bound at residue K68. An S-glutathionyl cysteine; alternate modification is found at C71. C71 and C74 are oxidised to a cystine. Residues Q103 and V115 each coordinate glutathione. C147 contacts [2Fe-2S] cluster.

Belongs to the glutaredoxin family. In terms of assembly, monomer; active form. Homodimer; inactive form. The homodimer is probably linked by 1 2Fe-2S cluster.

Its subcellular location is the mitochondrion. With respect to regulation, the 2Fe-2S present in the homodimer leads to inactivation of the enzyme. The 2Fe-2S may serve as a redox sensor: the presence of one-electron oxidants or reductants leading to the loss of the 2Fe-2S cluster, subsequent monomerization and activation of the enzyme. Glutathione-dependent oxidoreductase that facilitates the maintenance of mitochondrial redox homeostasis upon induction of apoptosis by oxidative stress. Involved in response to hydrogen peroxide and regulation of apoptosis caused by oxidative stress. Acts as a very efficient catalyst of monothiol reactions because of its high affinity for protein glutathione-mixed disulfides. Can receive electrons not only from glutathione (GSH), but also from thioredoxin reductase supporting both monothiol and dithiol reactions. Efficiently catalyzes both glutathionylation and deglutathionylation of mitochondrial complex I, which in turn regulates the superoxide production by the complex. Overexpression decreases the susceptibility to apoptosis and prevents loss of cardiolipin and cytochrome c release. This Bos taurus (Bovine) protein is Glutaredoxin-2, mitochondrial (GLRX2).